We begin with the raw amino-acid sequence, 137 residues long: Basic phospholipase A2 homolog bothropstoxin-I (137 aa).

The first 16 residues, 1–16 (MRTLWIMAVLLVGVEG), serve as a signal peptide directing secretion. 7 disulfide bridges follow: Cys-42/Cys-131, Cys-44/Cys-60, Cys-59/Cys-111, Cys-65/Cys-137, Cys-66/Cys-104, Cys-73/Cys-97, and Cys-91/Cys-102. Residues 121–133 (KKYRYHLKPFCKK) form an important for membrane-damaging activities in eukaryotes and bacteria; heparin-binding region.

It belongs to the phospholipase A2 family. Group II subfamily. K49 sub-subfamily. Homodimer; non-covalently linked (probable alternative/compact dimer conformation in solution). Binds to heparin. As to expression, expressed by the venom gland.

It localises to the secreted. Suramin inhibits both myotoxic and muscle-paralyzing activities. Chicoric acid inhibits myotoxic activity. Zinc ions inhibits the myotoxic activity and the neuromuscular blockade. Heparin inhibits myotoxic activity. Functionally, snake venom phospholipase A2 homolog that lacks enzymatic activity. Shows local myotoxic activity. Induces inflammation, since it induces edema and leukocytes infiltration. In addition, it induces NLRP3 NLRP3, ASC (PYCARD), caspase-1 (CASP1), and IL-1beta (IL1B) gene expression in the gastrocnemius muscle, showing that it is able to activate NLRP3 inflammasome. It also damages artificial and myoblast membranes by a calcium-independent mechanism, has bactericidal activity, and induces neuromuscular blockade. A model of myotoxic mechanism has been proposed: an apo Lys49-PLA2 is activated by the entrance of a hydrophobic molecule (e.g. fatty acid) at the hydrophobic channel of the protein leading to a reorientation of a monomer. This reorientation causes a transition between 'inactive' to 'active' states, causing alignment of C-terminal and membrane-docking sites (MDoS) side-by-side and putting the membrane-disruption sites (MDiS) in the same plane, exposed to solvent and in a symmetric position for both monomers. The MDoS region stabilizes the toxin on membrane by the interaction of charged residues with phospholipid head groups. Subsequently, the MDiS region destabilizes the membrane with penetration of hydrophobic residues. This insertion causes a disorganization of the membrane, allowing an uncontrolled influx of ions (i.e. calcium and sodium), and eventually triggering irreversible intracellular alterations and cell death. The polypeptide is Basic phospholipase A2 homolog bothropstoxin-I (Bothrops jararacussu (Jararacussu)).